Reading from the N-terminus, the 423-residue chain is FAD-dependent monooxygenase asL6 (423 aa).

FAD-binding positions include 10-13 (AGVA), 34-35 (ER), arginine 108, tyrosine 290, and aspartate 312. The chain crosses the membrane as a helical span at residues 371 to 391 (GMGMFQSKFGVGVFYVLLAII).

The protein belongs to the aromatic-ring hydroxylase family. FAD is required as a cofactor.

The protein localises to the membrane. The protein operates within secondary metabolite biosynthesis; terpenoid biosynthesis. In terms of biological role, FAD-dependent monooxygenase; part of the gene cluster that mediates the biosynthesis of xenovulene A, an unusual meroterpenoid that has potent inhibitory effects on the human gamma-aminobutyrate A (GABAA) benzodiazepine receptor. The first step of xenovulene A biosynthesis is the biosynthesis of 3-methylorcinaldehyde performed by the non-reducing polyketide synthase aspks1. The salicylate hydroxylase asL1 then catalyzes the oxidative dearomatization of 3-methylorcinaldehyde to yield a dearomatized hydroxycyclohexadione. The 2-oxoglutarate-dependent dioxygenase asL3 further catalyzes the oxidative ring expansion to provide the first tropolone metabolite. The cytochrome P450 monooxygenase asR2 allows the synthesis of tropolone hemiacetal. In parallel, a previously unrecognised class of terpene cyclase, asR6, produces alpha-humulene from farnesylpyrophosphate (FPP). The putative Diels-Alderase asR5 probably catalyzes the formation of the tropolone-humulene skeleton by linking humulene and the polyketide moiety. Oxidative-ring contractions catalyzed by asL4 and asL6 then processively remove carbon atoms from the polyketide to yield xenovulene A. In Sarocladium schorii (Acremonium strictum (strain IMI 501407)), this protein is FAD-dependent monooxygenase asL6.